The chain runs to 184 residues: CDP-archaeol synthase (184 aa).

The next 5 helical transmembrane spans lie at 4 to 24 (IIMVLYSIFLFLPAFIANPGA), 54 to 74 (FIGGSLIGVLAGIIVYYIIYI), 86 to 106 (IISALPVLFAMSFGSLTGDIT), 122 to 142 (GSLLDQWPFVLMSFLFIFIFA), and 145 to 165 (FFLEFYGNFIAIILILVLTPP).

Belongs to the CDP-archaeol synthase family. Mg(2+) serves as cofactor.

It is found in the cell membrane. The catalysed reaction is 2,3-bis-O-(geranylgeranyl)-sn-glycerol 1-phosphate + CTP + H(+) = CDP-2,3-bis-O-(geranylgeranyl)-sn-glycerol + diphosphate. The protein operates within membrane lipid metabolism; glycerophospholipid metabolism. In terms of biological role, catalyzes the formation of CDP-2,3-bis-(O-geranylgeranyl)-sn-glycerol (CDP-archaeol) from 2,3-bis-(O-geranylgeranyl)-sn-glycerol 1-phosphate (DGGGP) and CTP. This reaction is the third ether-bond-formation step in the biosynthesis of archaeal membrane lipids. The polypeptide is CDP-archaeol synthase (Picrophilus torridus (strain ATCC 700027 / DSM 9790 / JCM 10055 / NBRC 100828 / KAW 2/3)).